A 264-amino-acid polypeptide reads, in one-letter code: tRNA pseudouridine synthase A (264 aa).

The active-site Nucleophile is D51. Residue Y109 participates in substrate binding.

It belongs to the tRNA pseudouridine synthase TruA family. In terms of assembly, homodimer.

The enzyme catalyses uridine(38/39/40) in tRNA = pseudouridine(38/39/40) in tRNA. Its function is as follows. Formation of pseudouridine at positions 38, 39 and 40 in the anticodon stem and loop of transfer RNAs. The polypeptide is tRNA pseudouridine synthase A (Yersinia pseudotuberculosis serotype O:1b (strain IP 31758)).